The following is a 194-amino-acid chain: Small ribosomal subunit protein uS4c (194 aa).

The S4 RNA-binding domain maps to 82–143 (MRLDNILFRL…KQRSKALIQN (62 aa)).

It belongs to the universal ribosomal protein uS4 family. Part of the 30S ribosomal subunit. Contacts protein S5. The interaction surface between S4 and S5 is involved in control of translational fidelity.

Its subcellular location is the plastid. It is found in the chloroplast. In terms of biological role, one of the primary rRNA binding proteins, it binds directly to 16S rRNA where it nucleates assembly of the body of the 30S subunit. Its function is as follows. With S5 and S12 plays an important role in translational accuracy. The protein is Small ribosomal subunit protein uS4c (rps4) of Sisyrinchium striatum (Satin flower).